Reading from the N-terminus, the 281-residue chain is Sulfur carrier protein FdhD (281 aa).

The Cysteine persulfide intermediate role is filled by C127. 264–269 (FAREGR) contributes to the Mo-bis(molybdopterin guanine dinucleotide) binding site.

This sequence belongs to the FdhD family.

It localises to the cytoplasm. Functionally, required for formate dehydrogenase (FDH) activity. Acts as a sulfur carrier protein that transfers sulfur from IscS to the molybdenum cofactor prior to its insertion into FDH. The protein is Sulfur carrier protein FdhD of Mannheimia succiniciproducens (strain KCTC 0769BP / MBEL55E).